Consider the following 202-residue polypeptide: Small ribosomal subunit protein uS4c (202 aa).

Residues M90–I153 form the S4 RNA-binding domain.

It belongs to the universal ribosomal protein uS4 family. Part of the 30S ribosomal subunit. Contacts protein S5. The interaction surface between S4 and S5 is involved in control of translational fidelity.

The protein localises to the plastid. It localises to the chloroplast. In terms of biological role, one of the primary rRNA binding proteins, it binds directly to 16S rRNA where it nucleates assembly of the body of the 30S subunit. Functionally, with S5 and S12 plays an important role in translational accuracy. The polypeptide is Small ribosomal subunit protein uS4c (rps4) (Hypnum cupressiforme (Cypress-leaved plait-moss)).